The primary structure comprises 384 residues: Branched-chain-amino-acid aminotransferase 1, mitochondrial (384 aa).

A mitochondrion-targeting transit peptide spans 1-18 (MALRRCLPQYSTTSSYLS). Residue Lys231 is modified to N6-(pyridoxal phosphate)lysine.

Belongs to the class-IV pyridoxal-phosphate-dependent aminotransferase family. Pyridoxal 5'-phosphate is required as a cofactor.

Its subcellular location is the mitochondrion. The catalysed reaction is L-leucine + 2-oxoglutarate = 4-methyl-2-oxopentanoate + L-glutamate. The enzyme catalyses L-isoleucine + 2-oxoglutarate = (S)-3-methyl-2-oxopentanoate + L-glutamate. It catalyses the reaction L-valine + 2-oxoglutarate = 3-methyl-2-oxobutanoate + L-glutamate. Its pathway is amino-acid degradation; L-leucine degradation; 4-methyl-2-oxopentanoate from L-leucine (aminotransferase route): step 1/1. The protein operates within amino-acid degradation; L-valine degradation. Functionally, converts 2-oxo acids to branched-chain amino acids. Acts on leucine, isoleucine and valine. The sequence is that of Branched-chain-amino-acid aminotransferase 1, mitochondrial (BCAT1) from Arabidopsis thaliana (Mouse-ear cress).